The sequence spans 327 residues: Protoheme IX farnesyltransferase (327 aa).

8 helical membrane-spanning segments follow: residues 35-55 (LIPL…GWPL), 60-80 (LVCT…LNCL), 106-126 (SAFI…VSGV), 129-149 (LAAG…TALL), 157-177 (IVIG…AATG), 185-205 (WLFA…ALLL), 234-254 (GWIT…GGAF), and 283-303 (AKAL…LLIL).

This sequence belongs to the UbiA prenyltransferase family. Protoheme IX farnesyltransferase subfamily.

The protein localises to the cell inner membrane. It carries out the reaction heme b + (2E,6E)-farnesyl diphosphate + H2O = Fe(II)-heme o + diphosphate. It participates in porphyrin-containing compound metabolism; heme O biosynthesis; heme O from protoheme: step 1/1. Converts heme B (protoheme IX) to heme O by substitution of the vinyl group on carbon 2 of heme B porphyrin ring with a hydroxyethyl farnesyl side group. This Synechococcus sp. (strain CC9605) protein is Protoheme IX farnesyltransferase.